A 398-amino-acid chain; its full sequence is Cell division protein FtsZ (398 aa).

GTP is bound by residues 24-28 (GAGGN), 111-113 (GTG), E154, R158, and D202. Residues 333–381 (GRNNKSETSPISQSEDSEKEKFKWPYSQSESTQDKTLETKPAEQVSEGA) form a disordered region. A compositionally biased stretch (basic and acidic residues) spans 364–373 (TQDKTLETKP).

The protein belongs to the FtsZ family. Homodimer. Polymerizes to form a dynamic ring structure in a strictly GTP-dependent manner. Interacts directly with several other division proteins.

The protein resides in the cytoplasm. Essential cell division protein that forms a contractile ring structure (Z ring) at the future cell division site. The regulation of the ring assembly controls the timing and the location of cell division. One of the functions of the FtsZ ring is to recruit other cell division proteins to the septum to produce a new cell wall between the dividing cells. Binds GTP and shows GTPase activity. This Wolbachia sp protein is Cell division protein FtsZ.